The following is a 413-amino-acid chain: L-arginine-specific L-amino acid ligase (413 aa).

Residues 115–312 (KTKLKMEGIP…LWESSLNISV (198 aa)) enclose the ATP-grasp domain. 141-202 (GEKLGWPIIV…EKCIEMEEFH (62 aa)) lines the ATP pocket. Positions 268 and 281 each coordinate Mg(2+). Positions 268 and 281 each coordinate Mn(2+).

Homodimer. Mg(2+) serves as cofactor. Requires Mn(2+) as cofactor. Co(2+) is required as a cofactor.

The enzyme catalyses an L-alpha-amino acid + L-arginine + ATP = L-arginyl-L-alpha-amino acid + ADP + phosphate + H(+). Catalyzes the synthesis of Arg-Xaa dipeptides in an ATP-dependent manner. Has strict specificity toward arginine as the N-terminal substrate. This chain is L-arginine-specific L-amino acid ligase, found in Bacillus subtilis.